Here is a 135-residue protein sequence, read N- to C-terminus: MAEFKVVIADPNTGETFQREVDGQDANRFLGRDIGDEIGGDAVGLSEHTIAITGGSDETGRPMREDVSGTRLKELLLEGGVGFEPSREGERKRITVRGREIDNDVAQINVSVVEGDDVAAALGEGDADADDADEE.

It belongs to the eukaryotic ribosomal protein eS6 family.

The sequence is that of Small ribosomal subunit protein eS6 from Halorubrum lacusprofundi (strain ATCC 49239 / DSM 5036 / JCM 8891 / ACAM 34).